The chain runs to 1214 residues: Brassinosteroid LRR receptor kinase BRL3 (1214 aa).

The first 29 residues, M1–A29, serve as a signal peptide directing secretion. N61 carries an N-linked (GlcNAc...) asparagine glycan. Positions C69–C76 match the Cys pair 1 motif. LRR repeat units follow at residues L103–R127, P131–S155, C156–P177, P178–G202, H204–E228, S230–M250, P252–G276, C277–C302, R303–V325, L327–L351, K353–Q375, R377–N400, I401–C427, L429–S451, L452–C476, N478–L500, K502–S525, T526–C549, V550–N572, L573–C597, N599–Q621, and G650–S673. N-linked (GlcNAc...) asparagine glycosylation is found at N145, N163, N197, and N210. Residues N254, N264, and N279 are each glycosylated (N-linked (GlcNAc...) asparagine). 2 N-linked (GlcNAc...) asparagine glycosylation sites follow: N400 and N413. N466 is a glycosylation site (N-linked (GlcNAc...) asparagine). N512 and N524 each carry an N-linked (GlcNAc...) asparagine glycan. An N-linked (GlcNAc...) asparagine glycan is attached at N561. Y678 contributes to the brassinolide binding site. 4 LRR repeats span residues N689–N712, M713–G736, K738–C760, and H762–T786. Residues C799–C806 carry the Cys pair 2 motif. A helical membrane pass occupies residues S829–Y849. Positions F913–L1196 constitute a Protein kinase domain. Residues I919–V927, K941, E987–M989, S993–F996, D1039–N1044, and D1057 each bind ATP. D1039 acts as the Proton acceptor in catalysis.

Belongs to the protein kinase superfamily. Ser/Thr protein kinase family. In terms of tissue distribution, highly expressed in roots. Expressed at low levels in shoots.

The protein localises to the cell membrane. The catalysed reaction is L-seryl-[protein] + ATP = O-phospho-L-seryl-[protein] + ADP + H(+). It carries out the reaction L-threonyl-[protein] + ATP = O-phospho-L-threonyl-[protein] + ADP + H(+). In terms of biological role, may be involved in brassenosteroid (BR) perception in roots. This chain is Brassinosteroid LRR receptor kinase BRL3, found in Oryza sativa subsp. japonica (Rice).